Here is a 353-residue protein sequence, read N- to C-terminus: Ferredoxin--NADP reductase 1 (353 aa).

FAD is bound by residues Thr-14, Asp-33, Gln-41, Tyr-46, Ala-86, Phe-121, Asp-289, and Thr-330.

It belongs to the ferredoxin--NADP reductase type 2 family. In terms of assembly, homodimer. FAD is required as a cofactor.

The enzyme catalyses 2 reduced [2Fe-2S]-[ferredoxin] + NADP(+) + H(+) = 2 oxidized [2Fe-2S]-[ferredoxin] + NADPH. The polypeptide is Ferredoxin--NADP reductase 1 (Christiangramia forsetii (strain DSM 17595 / CGMCC 1.15422 / KT0803) (Gramella forsetii)).